We begin with the raw amino-acid sequence, 127 residues long: Glycine cleavage system H protein 1 (127 aa).

One can recognise a Lipoyl-binding domain in the interval 20-101; it reads LLTVGITAYA…LGEAWFFRFR (82 aa). Lys-60 carries the post-translational modification N6-lipoyllysine.

The protein belongs to the GcvH family. In terms of assembly, the glycine cleavage system is composed of four proteins: P, T, L and H. The cofactor is (R)-lipoate.

Its function is as follows. The glycine cleavage system catalyzes the degradation of glycine. The H protein shuttles the methylamine group of glycine from the P protein to the T protein. The protein is Glycine cleavage system H protein 1 of Pseudomonas aeruginosa (strain ATCC 15692 / DSM 22644 / CIP 104116 / JCM 14847 / LMG 12228 / 1C / PRS 101 / PAO1).